The primary structure comprises 153 residues: Putative tRNA (cytidine(34)-2'-O)-methyltransferase (153 aa).

Gly-102, Ile-122, and Ser-131 together coordinate S-adenosyl-L-methionine.

The protein belongs to the class IV-like SAM-binding methyltransferase superfamily. RNA methyltransferase TrmH family. TrmL subfamily.

It localises to the cytoplasm. It carries out the reaction cytidine(34) in tRNA + S-adenosyl-L-methionine = 2'-O-methylcytidine(34) in tRNA + S-adenosyl-L-homocysteine + H(+). The enzyme catalyses 5-carboxymethylaminomethyluridine(34) in tRNA(Leu) + S-adenosyl-L-methionine = 5-carboxymethylaminomethyl-2'-O-methyluridine(34) in tRNA(Leu) + S-adenosyl-L-homocysteine + H(+). Functionally, could methylate the ribose at the nucleotide 34 wobble position in tRNA. The polypeptide is Putative tRNA (cytidine(34)-2'-O)-methyltransferase (Synechocystis sp. (strain ATCC 27184 / PCC 6803 / Kazusa)).